Reading from the N-terminus, the 54-residue chain is Large ribosomal subunit protein bL32c (54 aa).

It belongs to the bacterial ribosomal protein bL32 family.

Its subcellular location is the plastid. The protein localises to the chloroplast. This chain is Large ribosomal subunit protein bL32c, found in Lactuca sativa (Garden lettuce).